The chain runs to 158 residues: Transcription elongation factor GreA (158 aa).

The stretch at 53-75 (AKERQGQVEATIGDLEDKLSRAQ) forms a coiled coil.

Belongs to the GreA/GreB family.

In terms of biological role, necessary for efficient RNA polymerase transcription elongation past template-encoded arresting sites. The arresting sites in DNA have the property of trapping a certain fraction of elongating RNA polymerases that pass through, resulting in locked ternary complexes. Cleavage of the nascent transcript by cleavage factors such as GreA or GreB allows the resumption of elongation from the new 3'terminus. GreA releases sequences of 2 to 3 nucleotides. The chain is Transcription elongation factor GreA from Sphingopyxis alaskensis (strain DSM 13593 / LMG 18877 / RB2256) (Sphingomonas alaskensis).